We begin with the raw amino-acid sequence, 117 residues long: Protein MGF 110-13L (117 aa).

An N-terminal signal peptide occupies residues 1–16; it reads MKLFVLLSILVWLAQP.

This sequence belongs to the asfivirus MGF 110 family.

In Ornithodoros (relapsing fever ticks), this protein is Protein MGF 110-13L.